A 705-amino-acid chain; its full sequence is Tyrosine decarboxylase (705 aa).

Over residues 22–32 (RIRNSLSPSRP) the composition is skewed to polar residues. The segment at 22–81 (RIRNSLSPSRPSMSEATATGSSSSSRASTTIPSTPNMDVTPTVEDPRQNDNNASGMTRDE) is disordered. A compositionally biased stretch (low complexity) spans 33–55 (SMSEATATGSSSSSRASTTIPST). Lysine 380 is subject to N6-(pyridoxal phosphate)lysine. Positions 554-620 (VKAVIAEEDE…AQKQHESLAK (67 aa)) form a coiled coil. Over residues 667-678 (HSQRPNRLSQSP) the composition is skewed to polar residues. The interval 667 to 687 (HSQRPNRLSQSPGSAGSAFFD) is disordered.

The protein belongs to the group II decarboxylase family. Pyridoxal 5'-phosphate is required as a cofactor. As to expression, expressed in the gonadal sheath projections in between the oocytes, in head RIM motor neurons and RIC interneurons.

Its subcellular location is the cytoplasm. The protein resides in the cell projection. It localises to the axon. The protein localises to the perikaryon. The catalysed reaction is L-tyrosine + H(+) = tyramine + CO2. Its function is as follows. Required for the decarboxylation of tyrosine to tyramine, a precursor of octopamine but probably also itself a neurotransmitter. Involved in the regulation of egg laying, which is inhibited by tyramine. Also involved in controlling locomotion and head movements. Due to its involvement in octopamine biosynthesis, also required for crtc-1-dependent regulation of AMPK-mediated longevity which requires octopamine signaling. In Caenorhabditis elegans, this protein is Tyrosine decarboxylase.